The following is a 156-amino-acid chain: Ribonuclease pancreatic (156 aa).

Residues 1–28 (MALEKSLALLPLLVLVLLVLGWVQPSLG) form the signal peptide. Over residues 33 to 43 (AKKFQRQHMDS) the composition is skewed to basic and acidic residues. The disordered stretch occupies residues 33-52 (AKKFQRQHMDSDGSPSSNPT). Substrate-binding residues include Lys35 and Arg38. The active-site Proton acceptor is His40. Disulfide bonds link Cys54–Cys112, Cys68–Cys123, Cys86–Cys138, and Cys93–Cys100. Asn62 carries N-linked (GlcNAc...) asparagine glycosylation. A substrate-binding site is contributed by 69-73 (KPVNT). A glycan (N-linked (GlcNAc...) asparagine) is linked at Asn90. Substrate contacts are provided by Lys94 and Arg113. A glycan (N-linked (GlcNAc...) asparagine) is linked at Asn116. The active-site Proton donor is the His147.

The protein belongs to the pancreatic ribonuclease family. In terms of assembly, monomer. Interacts with and forms tight 1:1 complexes with RNH1. Dimerization of two such complexes may occur. Interaction with RNH1 inhibits this protein.

Its subcellular location is the secreted. The catalysed reaction is an [RNA] containing cytidine + H2O = an [RNA]-3'-cytidine-3'-phosphate + a 5'-hydroxy-ribonucleotide-3'-[RNA].. It catalyses the reaction an [RNA] containing uridine + H2O = an [RNA]-3'-uridine-3'-phosphate + a 5'-hydroxy-ribonucleotide-3'-[RNA].. Endonuclease that catalyzes the cleavage of RNA on the 3' side of pyrimidine nucleotides. Acts on single-stranded and double-stranded RNA. This Ateles geoffroyi (Black-handed spider monkey) protein is Ribonuclease pancreatic (RNASE1).